A 312-amino-acid chain; its full sequence is Olfactory receptor 2M5 (312 aa).

Residues 1-25 are Extracellular-facing; the sequence is MAWENQTFNSDFILLGIFNHSPTHT. N-linked (GlcNAc...) asparagine glycosylation occurs at N5. A helical membrane pass occupies residues 26–49; it reads FLFFLVLAIFSVAFMGNSVMVLLI. Topologically, residues 50–57 are cytoplasmic; that stretch reads YLDTQLHT. Residues 58 to 79 form a helical membrane-spanning segment; the sequence is PMYFLLSQLFLMDLMLICSTVP. Topologically, residues 80–100 are extracellular; sequence KMAFNYLSGSKSISMAGCATQ. C97 and C189 are disulfide-bonded. The chain crosses the membrane as a helical span at residues 101-120; the sequence is IFFYVSLLGSECFLLAVMSY. The Cytoplasmic portion of the chain corresponds to 121–139; sequence DRYIAICHPLRYTNLMRPK. Residues 140 to 158 form a helical membrane-spanning segment; sequence ICGLMTAFSWILGSMDAII. At 159-195 the chain is on the extracellular side; the sequence is DAVATFSFSYCGSREIAHFFCDFPSLLILSCNDTSIF. Residues 196–219 traverse the membrane as a helical segment; the sequence is EKVLFICCIVMIVFPVAIIIASYA. Residues 220–236 lie on the Cytoplasmic side of the membrane; that stretch reads RVILAVIHMGSGEGRRK. Residues 237–259 traverse the membrane as a helical segment; that stretch reads AFTTCSSHLMVVGMYYGAGLFMY. The Extracellular portion of the chain corresponds to 260 to 272; sequence IRPTSDRSPMQDK. A helical transmembrane segment spans residues 273–292; sequence LVSVFYTILTPMLNPLIYSL. Residues 293 to 311 are Cytoplasmic-facing; it reads RNKEVTRALRKVLGKGKCG.

Belongs to the G-protein coupled receptor 1 family.

Its subcellular location is the cell membrane. Functionally, odorant receptor. This Homo sapiens (Human) protein is Olfactory receptor 2M5 (OR2M5).